The primary structure comprises 421 residues: Testin (421 aa).

Positions 92–199 constitute a PET domain; that stretch reads MILTNPVAAK…GDVKLPCEMD (108 aa). Positions 133–164 are disordered; that stretch reads EKQPVAGSEGAQYRKKQLAKQLPAHDQDPSKC. Over residues 155–164 the composition is skewed to basic and acidic residues; sequence PAHDQDPSKC. 3 LIM zinc-binding domains span residues 234–297, 299–359, and 362–421; these read YFCY…CDSE, PRCA…NHAV, and QGCH…KMMS.

This sequence belongs to the prickle / espinas / testin family. In terms of assembly, interacts via LIM domain 1 with ZYX. Interacts (via LIM domain 3) with ENAH and VASP. Interacts with ALKBH4, talin, actin, alpha-actinin, GRIP1 and PXN. Interacts (via LIM domain 2) with ACTL7A (via N-terminus). Heterodimer with ACTL7A; the heterodimer interacts with ENAH to form a heterotrimer.

It is found in the cytoplasm. Its subcellular location is the cell junction. The protein localises to the focal adhesion. Functionally, scaffold protein that may play a role in cell adhesion, cell spreading and in the reorganization of the actin cytoskeleton. Plays a role in the regulation of cell proliferation. May act as a tumor suppressor. The chain is Testin (TES) from Plecturocebus moloch (Dusky titi monkey).